A 427-amino-acid polypeptide reads, in one-letter code: Peptidase B (427 aa).

The Mn(2+) site is built by lysine 195 and aspartate 200. Residue lysine 207 is part of the active site. Mn(2+) is bound by residues aspartate 218, aspartate 277, and glutamate 279. Arginine 281 is a catalytic residue.

Belongs to the peptidase M17 family. In terms of assembly, homohexamer. The cofactor is Mn(2+).

The protein resides in the cytoplasm. It catalyses the reaction Release of an N-terminal amino acid, Xaa, from a peptide or arylamide. Xaa is preferably Glu or Asp but may be other amino acids, including Leu, Met, His, Cys and Gln.. Functionally, probably plays an important role in intracellular peptide degradation. The protein is Peptidase B of Escherichia coli (strain UTI89 / UPEC).